The following is a 309-amino-acid chain: Protein-L-isoaspartate O-methyltransferase 2 (309 aa).

The short motif at 23–28 (KKRKKK) is the Nuclear localization signal element. Ser-144 is an active-site residue.

The protein belongs to the methyltransferase superfamily. L-isoaspartyl/D-aspartyl protein methyltransferase family. As to expression, expressed in rosette leaves, stems, cauline leaves, flowers and developing seeds.

The protein localises to the nucleus. The catalysed reaction is [protein]-L-isoaspartate + S-adenosyl-L-methionine = [protein]-L-isoaspartate alpha-methyl ester + S-adenosyl-L-homocysteine. Its function is as follows. Catalyzes the methyl esterification of L-isoaspartyl residues in peptides and proteins that result from spontaneous decomposition of normal L-aspartyl and L-asparaginyl residues. It plays a role in the repair and/or degradation of damaged proteins. This Arabidopsis thaliana (Mouse-ear cress) protein is Protein-L-isoaspartate O-methyltransferase 2 (PIMT2).